A 196-amino-acid polypeptide reads, in one-letter code: Probable thymidylate kinase (196 aa).

An ATP-binding site is contributed by Gly-9 to Thr-16.

This sequence belongs to the thymidylate kinase family.

The enzyme catalyses dTMP + ATP = dTDP + ADP. This chain is Probable thymidylate kinase, found in Methanococcus aeolicus (strain ATCC BAA-1280 / DSM 17508 / OCM 812 / Nankai-3).